The primary structure comprises 65 residues: Putative antitoxin VapB7 (65 aa).

It belongs to the UPF0165 family.

In terms of biological role, possibly the antitoxin component of a type II toxin-antitoxin (TA) system. Its cognate toxin is VapC7 (Potential). The protein is Putative antitoxin VapB7 (vapB7) of Archaeoglobus fulgidus (strain ATCC 49558 / DSM 4304 / JCM 9628 / NBRC 100126 / VC-16).